We begin with the raw amino-acid sequence, 144 residues long: Large ribosomal subunit protein uL13 (144 aa).

Belongs to the universal ribosomal protein uL13 family. Part of the 50S ribosomal subunit.

This protein is one of the early assembly proteins of the 50S ribosomal subunit, although it is not seen to bind rRNA by itself. It is important during the early stages of 50S assembly. This is Large ribosomal subunit protein uL13 from Pelotomaculum thermopropionicum (strain DSM 13744 / JCM 10971 / SI).